We begin with the raw amino-acid sequence, 157 residues long: Large ribosomal subunit protein uL11 (157 aa).

2 disordered regions span residues 1–28 and 138–157; these read MAGT…GPTP and NNPR…DILK. Basic and acidic residues predominate over residues 139 to 157; sequence NPREFKSRMEDGEYDDILK.

It belongs to the universal ribosomal protein uL11 family. As to quaternary structure, part of the ribosomal stalk of the 50S ribosomal subunit. Interacts with L10 and the large rRNA to form the base of the stalk. L10 forms an elongated spine to which L12 dimers bind in a sequential fashion forming a multimeric L10(L12)X complex.

Functionally, forms part of the ribosomal stalk which helps the ribosome interact with GTP-bound translation factors. This is Large ribosomal subunit protein uL11 from Haloquadratum walsbyi (strain DSM 16790 / HBSQ001).